Consider the following 279-residue polypeptide: NADH dehydrogenase [ubiquinone] iron-sulfur protein 3, mitochondrial (279 aa).

The transit peptide at 1–27 (MISRTLLKRSLPTVQFLRPFTRSSIRR) directs the protein to the mitochondrion. The segment at 249-279 (EPVGEGKDFTPESFKLPTPEPEPEKESDEKK) is disordered. Over residues 270–279 (EPEKESDEKK) the composition is skewed to basic and acidic residues.

This sequence belongs to the complex I 30 kDa subunit family. As to quaternary structure, core subunit of respiratory chain NADH dehydrogenase (Complex I).

It localises to the mitochondrion inner membrane. It catalyses the reaction a ubiquinone + NADH + 5 H(+)(in) = a ubiquinol + NAD(+) + 4 H(+)(out). In terms of biological role, core subunit of the mitochondrial membrane respiratory chain NADH dehydrogenase (Complex I) which catalyzes electron transfer from NADH through the respiratory chain, using ubiquinone as an electron acceptor. Plays a role in cell wall integrity and is involved in osmotic and oxidative resistance, yeast to hypha transition and the ability to damage and invade oral epithelial cells. The polypeptide is NADH dehydrogenase [ubiquinone] iron-sulfur protein 3, mitochondrial (ALI1) (Candida albicans (strain SC5314 / ATCC MYA-2876) (Yeast)).